The primary structure comprises 239 residues: Ribulose-phosphate 3-epimerase (239 aa).

Residue Ser-9 coordinates substrate. The a divalent metal cation site is built by His-34, Asp-36, and His-78. The active-site Proton acceptor is Asp-36. Substrate is bound by residues His-78, 154–157 (GFGG), 183–185 (DGG), and 205–207 (GTS). Asp-183 contributes to the a divalent metal cation binding site. The Proton donor role is filled by Asp-183.

This sequence belongs to the ribulose-phosphate 3-epimerase family. Requires Co(2+) as cofactor. Fe(2+) serves as cofactor. It depends on Mn(2+) as a cofactor. The cofactor is Zn(2+).

It carries out the reaction D-ribulose 5-phosphate = D-xylulose 5-phosphate. It functions in the pathway carbohydrate degradation; pentose phosphate pathway; D-xylulose 5-phosphate from D-ribulose 5-phosphate (non-oxidative stage): step 1/1. Its function is as follows. Catalyzes the reversible epimerization of D-ribulose 5-phosphate to D-xylulose 5-phosphate. The chain is Ribulose-phosphate 3-epimerase (RPE1) from Eremothecium gossypii (strain ATCC 10895 / CBS 109.51 / FGSC 9923 / NRRL Y-1056) (Yeast).